The following is a 172-amino-acid chain: Shikimate kinase (172 aa).

11-16 (GAGKST) is an ATP binding site. Ser-15 serves as a coordination point for Mg(2+). Substrate-binding residues include Asp-33, Arg-57, and Gly-79. Residue Arg-117 participates in ATP binding. Arg-136 lines the substrate pocket. ATP is bound at residue Arg-153.

Belongs to the shikimate kinase family. As to quaternary structure, monomer. It depends on Mg(2+) as a cofactor.

Its subcellular location is the cytoplasm. The catalysed reaction is shikimate + ATP = 3-phosphoshikimate + ADP + H(+). It functions in the pathway metabolic intermediate biosynthesis; chorismate biosynthesis; chorismate from D-erythrose 4-phosphate and phosphoenolpyruvate: step 5/7. Catalyzes the specific phosphorylation of the 3-hydroxyl group of shikimic acid using ATP as a cosubstrate. In Pseudomonas syringae pv. syringae (strain B728a), this protein is Shikimate kinase.